A 407-amino-acid chain; its full sequence is MTEASENASATGGVAVVIVAAGRGARAGQANGPKQYQNIGGRAVIAHTLEIFLAHPRTDRIVVAIHADDHELFRQAAGSQAERVTAIIGGPTRQESVRLGLLALKEHAPGQVLIHDAVRPFVDADLIDRTISAIGENEGALPALPVADTLKRESAAGVVAETVSRSGLHAAQTPQGFPYGPILAAHDKAFQLGRLDFTDDAAIAEWAHIPVKLVPGSPDNVKLTWARDIAMAHQRLSSERTHFPDIRTGNGYDVHAFEPGDHVTLCGVAIPHDKKLSGHSDADVGLHALTDALLATCGAGDIGTHFPPSDPQWKGAASRIFVEHAAKVVRQRGGRIANADITLICEAPRVGPHREAMTAALSRMLGISADRISIKATTNEKLGFVGREEGIAAIATASVVFPGEVPE.

The 2-C-methyl-D-erythritol 4-phosphate cytidylyltransferase stretch occupies residues 1-246 (MTEASENASA…SSERTHFPDI (246 aa)). The 2-C-methyl-D-erythritol 2,4-cyclodiphosphate synthase stretch occupies residues 247–407 (RTGNGYDVHA…SVVFPGEVPE (161 aa)). A divalent metal cation-binding residues include aspartate 253 and histidine 255. 4-CDP-2-C-methyl-D-erythritol 2-phosphate contacts are provided by residues 253–255 (DVH) and 279–280 (HS). Residue histidine 287 participates in a divalent metal cation binding. 4-CDP-2-C-methyl-D-erythritol 2-phosphate is bound by residues 301-303 (DIG), 377-380 (TTNE), phenylalanine 384, and arginine 387.

It in the N-terminal section; belongs to the IspD/TarI cytidylyltransferase family. IspD subfamily. This sequence in the C-terminal section; belongs to the IspF family. The cofactor is a divalent metal cation.

The enzyme catalyses 2-C-methyl-D-erythritol 4-phosphate + CTP + H(+) = 4-CDP-2-C-methyl-D-erythritol + diphosphate. It carries out the reaction 4-CDP-2-C-methyl-D-erythritol 2-phosphate = 2-C-methyl-D-erythritol 2,4-cyclic diphosphate + CMP. Its pathway is isoprenoid biosynthesis; isopentenyl diphosphate biosynthesis via DXP pathway; isopentenyl diphosphate from 1-deoxy-D-xylulose 5-phosphate: step 2/6. It participates in isoprenoid biosynthesis; isopentenyl diphosphate biosynthesis via DXP pathway; isopentenyl diphosphate from 1-deoxy-D-xylulose 5-phosphate: step 4/6. Its function is as follows. Bifunctional enzyme that catalyzes the formation of 4-diphosphocytidyl-2-C-methyl-D-erythritol from CTP and 2-C-methyl-D-erythritol 4-phosphate (MEP) (IspD), and catalyzes the conversion of 4-diphosphocytidyl-2-C-methyl-D-erythritol 2-phosphate (CDP-ME2P) to 2-C-methyl-D-erythritol 2,4-cyclodiphosphate (ME-CPP) with a corresponding release of cytidine 5-monophosphate (CMP) (IspF). In Mesorhizobium japonicum (strain LMG 29417 / CECT 9101 / MAFF 303099) (Mesorhizobium loti (strain MAFF 303099)), this protein is Bifunctional enzyme IspD/IspF.